We begin with the raw amino-acid sequence, 882 residues long: Alanine--tRNA ligase (882 aa).

Zn(2+) is bound by residues H570, H574, C672, and H676.

Belongs to the class-II aminoacyl-tRNA synthetase family. Requires Zn(2+) as cofactor.

The protein localises to the cytoplasm. It catalyses the reaction tRNA(Ala) + L-alanine + ATP = L-alanyl-tRNA(Ala) + AMP + diphosphate. Catalyzes the attachment of alanine to tRNA(Ala) in a two-step reaction: alanine is first activated by ATP to form Ala-AMP and then transferred to the acceptor end of tRNA(Ala). Also edits incorrectly charged Ser-tRNA(Ala) and Gly-tRNA(Ala) via its editing domain. The sequence is that of Alanine--tRNA ligase from Xanthomonas campestris pv. campestris (strain B100).